Here is a 657-residue protein sequence, read N- to C-terminus: Conserved oligomeric Golgi complex subunit 6 (657 aa).

It belongs to the COG6 family. As to quaternary structure, component of the conserved oligomeric Golgi complex which is composed of eight different subunits and is required for normal Golgi morphology and localization.

The protein resides in the golgi apparatus membrane. In terms of biological role, required for normal Golgi function. This Homo sapiens (Human) protein is Conserved oligomeric Golgi complex subunit 6 (COG6).